A 520-amino-acid polypeptide reads, in one-letter code: GMP synthase [glutamine-hydrolyzing] (520 aa).

The region spanning 8–202 (RLLIIDFGSQ…FVRLAGFTGD (195 aa)) is the Glutamine amidotransferase type-1 domain. C86 serves as the catalytic Nucleophile. Catalysis depends on residues H177 and E179. The 193-residue stretch at 203–395 (WTMDAYREQA…LGLPASFIGR (193 aa)) folds into the GMPS ATP-PPase domain. 230 to 236 (SGGVDSS) contacts ATP.

Homodimer.

The enzyme catalyses XMP + L-glutamine + ATP + H2O = GMP + L-glutamate + AMP + diphosphate + 2 H(+). Its pathway is purine metabolism; GMP biosynthesis; GMP from XMP (L-Gln route): step 1/1. Functionally, catalyzes the synthesis of GMP from XMP. This chain is GMP synthase [glutamine-hydrolyzing], found in Dinoroseobacter shibae (strain DSM 16493 / NCIMB 14021 / DFL 12).